A 337-amino-acid chain; its full sequence is Protein-arginine kinase (337 aa).

The 229-residue stretch at 12–240 (IVIASKVKIL…NKLILREKNQ (229 aa)) folds into the Phosphagen kinase C-terminal domain. Residues 15–19 (ASKVK), 162–166 (RAKVF), and 193–198 (KSIYNS) each bind ATP.

This sequence belongs to the ATP:guanido phosphotransferase family.

The catalysed reaction is L-arginyl-[protein] + ATP = N(omega)-phospho-L-arginyl-[protein] + ADP + H(+). Its function is as follows. Catalyzes the specific phosphorylation of arginine residues in proteins. The sequence is that of Protein-arginine kinase from Clostridium perfringens (strain ATCC 13124 / DSM 756 / JCM 1290 / NCIMB 6125 / NCTC 8237 / Type A).